We begin with the raw amino-acid sequence, 174 residues long: Gamma-crystallin D (174 aa).

Beta/gamma crystallin 'Greek key' domains are found at residues 2-40 (GKIT…RVDS) and 41-83 (GCWM…RLIP). The segment at 84–87 (HAGS) is connecting peptide. 2 Beta/gamma crystallin 'Greek key' domains span residues 88–128 (HRIR…NVLE) and 129–171 (GCWV…RRVM).

The protein belongs to the beta/gamma-crystallin family. As to expression, detected in the superior olivary complex of the auditory hindbrain.

Its function is as follows. Crystallins are the dominant structural components of the vertebrate eye lens. This is Gamma-crystallin D (Crygd) from Mus musculus (Mouse).